Here is a 388-residue protein sequence, read N- to C-terminus: ATP phosphoribosyltransferase regulatory subunit (388 aa).

The protein belongs to the class-II aminoacyl-tRNA synthetase family. HisZ subfamily. In terms of assembly, heteromultimer composed of HisG and HisZ subunits.

It is found in the cytoplasm. It participates in amino-acid biosynthesis; L-histidine biosynthesis; L-histidine from 5-phospho-alpha-D-ribose 1-diphosphate: step 1/9. Required for the first step of histidine biosynthesis. May allow the feedback regulation of ATP phosphoribosyltransferase activity by histidine. The protein is ATP phosphoribosyltransferase regulatory subunit of Acinetobacter baumannii (strain AB307-0294).